Reading from the N-terminus, the 82-residue chain is ATP synthase subunit c, chloroplastic (82 aa).

Helical transmembrane passes span 4 to 24 and 57 to 77; these read IISA…AIGP and LAFM…LLFA.

It belongs to the ATPase C chain family. As to quaternary structure, F-type ATPases have 2 components, F(1) - the catalytic core - and F(0) - the membrane proton channel. F(1) has five subunits: alpha(3), beta(3), gamma(1), delta(1), epsilon(1). F(0) has four main subunits: a(1), b(1), b'(1) and c(10-14). The alpha and beta chains form an alternating ring which encloses part of the gamma chain. F(1) is attached to F(0) by a central stalk formed by the gamma and epsilon chains, while a peripheral stalk is formed by the delta, b and b' chains.

Its subcellular location is the plastid. It localises to the chloroplast thylakoid membrane. Functionally, f(1)F(0) ATP synthase produces ATP from ADP in the presence of a proton or sodium gradient. F-type ATPases consist of two structural domains, F(1) containing the extramembraneous catalytic core and F(0) containing the membrane proton channel, linked together by a central stalk and a peripheral stalk. During catalysis, ATP synthesis in the catalytic domain of F(1) is coupled via a rotary mechanism of the central stalk subunits to proton translocation. In terms of biological role, key component of the F(0) channel; it plays a direct role in translocation across the membrane. A homomeric c-ring of between 10-14 subunits forms the central stalk rotor element with the F(1) delta and epsilon subunits. The sequence is that of ATP synthase subunit c, chloroplastic from Heterosigma akashiwo (strain NIES-293 / 8280G21-1).